A 238-amino-acid chain; its full sequence is Envelope glycoprotein G (238 aa).

An N-terminal signal peptide occupies residues 1–24 (MSQGAMRAVVPIIPFLLVLVGVSG). The Virion surface portion of the chain corresponds to 25–189 (VPTNVSSTTQ…SFLTASPALD (165 aa)). Asn-28 and Asn-49 each carry an N-linked (GlcNAc...) asparagine; by host glycan. 2 stretches are compositionally biased toward polar residues: residues 28–42 (NVSSTTQPQLQTTGR) and 49–68 (NMTQTGTTDSPTAISLTTPD). Positions 28-171 (NVSSTTQPQL…LTSKGRPLVP (144 aa)) are disordered. Residues 78 to 88 (LEEEEEEEGAG) show a composition bias toward acidic residues. Residues 89–100 (DGEHLEGGDGTR) are compositionally biased toward basic and acidic residues. Residues 190–210 (TLFVVSTVIHTLSFLCIGAMA) traverse the membrane as a helical segment. Residues 211 to 238 (THLCGGWSRRGRRTHPSVRYVCLPSERG) are Intravirion-facing.

This sequence belongs to the alphaherpesvirinae glycoprotein G family.

It localises to the virion membrane. In terms of biological role, chemokine-binding protein that inhibits neutrophils' chemotaxis. The sequence is that of Envelope glycoprotein G (gG) from Human herpesvirus 1 (strain 17) (HHV-1).